Consider the following 210-residue polypeptide: dTTP/UTP pyrophosphatase (210 aa).

Asp89 (proton acceptor) is an active-site residue.

Belongs to the Maf family. YhdE subfamily. A divalent metal cation serves as cofactor.

Its subcellular location is the cytoplasm. The catalysed reaction is dTTP + H2O = dTMP + diphosphate + H(+). It catalyses the reaction UTP + H2O = UMP + diphosphate + H(+). Functionally, nucleoside triphosphate pyrophosphatase that hydrolyzes dTTP and UTP. May have a dual role in cell division arrest and in preventing the incorporation of modified nucleotides into cellular nucleic acids. In Burkholderia lata (strain ATCC 17760 / DSM 23089 / LMG 22485 / NCIMB 9086 / R18194 / 383), this protein is dTTP/UTP pyrophosphatase.